Consider the following 87-residue polypeptide: Acyl-CoA-binding protein 2 (87 aa).

Residues 2-87 (VSQLFEEKAK…VDNLIAKYSS (86 aa)) enclose the ACB domain. An acyl-CoA contacts are provided by residues 29–33 (YGLYK), K51, K55, and Y74.

It belongs to the ACBP family.

Functionally, binds medium- and long-chain acyl-CoA esters with very high affinity and may function as an intracellular carrier of acyl-CoA esters. This Saccharomyces pastorianus (strain ATCC 76670 / Carlsberg bottom yeast no.2 / CBS 1503 / CLIB 180 / NBRC 10610 / NRRL Y-1525) (Saaz-type lager yeast) protein is Acyl-CoA-binding protein 2 (ACB2).